A 305-amino-acid polypeptide reads, in one-letter code: Methionyl-tRNA formyltransferase (305 aa).

111 to 114 serves as a coordination point for (6S)-5,6,7,8-tetrahydrofolate; sequence SLLP.

It belongs to the Fmt family.

It carries out the reaction L-methionyl-tRNA(fMet) + (6R)-10-formyltetrahydrofolate = N-formyl-L-methionyl-tRNA(fMet) + (6S)-5,6,7,8-tetrahydrofolate + H(+). In terms of biological role, attaches a formyl group to the free amino group of methionyl-tRNA(fMet). The formyl group appears to play a dual role in the initiator identity of N-formylmethionyl-tRNA by promoting its recognition by IF2 and preventing the misappropriation of this tRNA by the elongation apparatus. This Helicobacter pylori (strain P12) protein is Methionyl-tRNA formyltransferase.